We begin with the raw amino-acid sequence, 680 residues long: DNA-directed RNA polymerase subunit beta' (680 aa).

4 residues coordinate Zn(2+): Cys-69, Cys-71, Cys-87, and Cys-90. 3 residues coordinate Mg(2+): Asp-489, Asp-491, and Asp-493.

It belongs to the RNA polymerase beta' chain family. RpoC1 subfamily. In plastids the minimal PEP RNA polymerase catalytic core is composed of four subunits: alpha, beta, beta', and beta''. When a (nuclear-encoded) sigma factor is associated with the core the holoenzyme is formed, which can initiate transcription. Mg(2+) serves as cofactor. The cofactor is Zn(2+).

Its subcellular location is the plastid. The protein resides in the chloroplast. It catalyses the reaction RNA(n) + a ribonucleoside 5'-triphosphate = RNA(n+1) + diphosphate. DNA-dependent RNA polymerase catalyzes the transcription of DNA into RNA using the four ribonucleoside triphosphates as substrates. The chain is DNA-directed RNA polymerase subunit beta' from Lobularia maritima (Sweet alyssum).